A 213-amino-acid chain; its full sequence is Putative cytochrome c-type biogenesis protein HI_1454 (213 aa).

The next 6 helical transmembrane spans lie at 15–35 (GLAS…FGIL), 46–66 (FLFI…FGFL), 77–97 (IIAG…FKIG), 118–138 (AFVL…PILA), 154–174 (ASMM…FSFF), and 192–212 (FKIG…TNNF).

It belongs to the DsbD family.

It is found in the cell membrane. Could be involved in cytochrome c synthesis. This chain is Putative cytochrome c-type biogenesis protein HI_1454, found in Haemophilus influenzae (strain ATCC 51907 / DSM 11121 / KW20 / Rd).